A 1955-amino-acid chain; its full sequence is Protocadherin-15 (1955 aa).

The signal sequence occupies residues 1-26; that stretch reads MFRQFYLWTCLASGIILGSLFEICLG. The Extracellular portion of the chain corresponds to 27-1376; sequence QYDDDCKLAR…GESLGYTEGA (1350 aa). A disulfide bridge connects residues C32 and C120. 11 Cadherin domains span residues 40–147, 148–265, 278–395, 396–509, 510–616, 617–717, 719–819, 820–926, 927–1035, 1037–1144, and 1145–1259; these read PATI…SPTF, KHES…GPMF, RPLT…SPYF, TMPS…TPTF, PEIS…PPRF, PQLM…APVF, PYLP…SPVF, TNST…PPVF, SKRI…IPRF, QEEY…PPVF, and QKKF…PPTL. Residues N52, N97, and N201 are each glycosylated (N-linked (GlcNAc...) asparagine). Residues N419, N559, N662, N724, N768, N821, and N851 are each glycosylated (N-linked (GlcNAc...) asparagine). N-linked (GlcNAc...) asparagine glycans are attached at residues N1064, N1084, and N1175. A helical transmembrane segment spans residues 1377-1397; it reads LLALAFIIILCCIPAILVVLV. The Cytoplasmic segment spans residues 1398-1955; that stretch reads SYRQFKVRQA…KQSHSQSTSL (558 aa). Positions 1426–1444 are enriched in pro residues; it reads VPAPAPVAAPPPPPPPPPG. Disordered stretches follow at residues 1426-1446, 1601-1623, 1745-1766, and 1928-1955; these read VPAPAPVAAPPPPPPPPPGAH, QGTRQKAENENTGICTNKRGSSN, CPLPPPPPISPPSPPPAPAPLA, and ITSEQNKGSLNNIVEGTEKQSHSQSTSL. Polar residues predominate over residues 1928-1941; the sequence is ITSEQNKGSLNNIV.

Antiparallel heterodimer with CDH23. Found in a complex with TMIE and LHFPL5. Interacts with LHFPL5/TMHS; this interaction is required for efficient localization to hair bundles. Interacts with MYO7A. Interacts with USH1G; this interaction may recruit USH1G to the plasma membrane. Interacts with TOMT. Isoforms CD1 and CD3 interact with TMC1 (via N-terminus) and TMC2 (via N-terminus). Expressed in brain, lung, kidney, spleen and testis. Found also in the inner and outer synaptic layers, and the nerve fiber layer in adult and fetal retinas. Found in the supporting cells, outer sulcus cells and spiral ganglion of fetal cochlea. Expressed in cytotoxic tumor-derived T- and NK-cell lines as well as biopsies of nasal NK/T-cell lymphomas. Not detected in normal or in vitro activated peripheral blood cells, CD4 or CD8 lymphocytes or NK cells. Isoform 3 is expressed in brain, heart, cerebellum and kidney. CD1 isoforms, such as isoform 1, have a limited pattern of expression and is detected in testis, retina and cochlea. CD2 isoforms, such as isoforms 4 and 5, are expressed in heart, kidney, thymus, spleen, testis, retina and cochlea. CD3 isoforms, such as isoform 6, are widely expressed.

It localises to the cell membrane. The protein localises to the secreted. Calcium-dependent cell-adhesion protein. Essential for maintenance of normal retinal and cochlear function. The chain is Protocadherin-15 (PCDH15) from Homo sapiens (Human).